The sequence spans 3021 residues: Genome polyprotein (3021 aa).

An N-acetylserine; by host modification is found at S2. The interaction with STAT1 stretch occupies residues 2–23 (STLPKPQRKTKRNTIRRPQDVK). The tract at residues 2-58 (STLPKPQRKTKRNTIRRPQDVKFPGGGVIYVGVYVLPRRGPRLGVRATRKTSERSQP) is interaction with EIF2AK2/PKR. The interaction with DDX3X stretch occupies residues 2-59 (STLPKPQRKTKRNTIRRPQDVKFPGGGVIYVGVYVLPRRGPRLGVRATRKTSERSQPR). The interval 2–75 (STLPKPQRKT…PKARRSEGRS (74 aa)) is disordered. The Cytoplasmic portion of the chain corresponds to 2–168 (STLPKPQRKT…EDGINFATGN (167 aa)). 2 short sequence motifs (nuclear localization signal) span residues 5–13 (PKPQRKTKR) and 38–43 (PRRGPR). Positions 7–16 (PQRKTKRNTI) are enriched in basic residues. S53 bears the Phosphoserine; by host mark. 2 short sequence motifs (nuclear localization signal) span residues 58 to 64 (PRGRRKP) and 66 to 71 (PKARRS). The span at 58–68 (PRGRRKPIPKA) shows a compositional bias: basic residues. Phosphoserine; by host occurs at positions 99 and 116. The important for endoplasmic reticulum and mitochondrial localization stretch occupies residues 112–152 (PRRRSRNLGKVIDTLTCGFADLMGYIPLVGAPLGGAARALA). The tract at residues 122–173 (VIDTLTCGFADLMGYIPLVGAPLGGAARALAHGVRALEDGINFATGNLPGCS) is interaction with APOA2. An important for lipid droplets localization region spans residues 164–167 (FATG). The chain crosses the membrane as a helical span at residues 169 to 189 (LPGCSFSIFLLALFSCLIHPA). The propeptide at 178 to 191 (LLALFSCLIHPAAS) is ER anchor for the core protein, removed in mature form by host signal peptidase. At 190-358 (ASLEWRNTSG…AGAHWGIIAG (169 aa)) the chain is on the lumenal side. N196, N209, and N234 each carry an N-linked (GlcNAc...) asparagine; by host glycan. Positions 265–296 (LVGAGTMCSALYVGDMCGPVFLVGQAFTFRPR) are important for fusion. N305 carries an N-linked (GlcNAc...) asparagine; by host glycan. Residues 359 to 379 (LAYYSMQGNWAKVAIIMVMFS) traverse the membrane as a helical segment. Topologically, residues 380–731 (GVDASTHVTA…WEFVILIFLL (352 aa)) are lumenal. The interval 385–412 (THVTAGQAARNAYGITSLFSVGAKQNLQ) is HVR1. N417, N423, and N430 each carry an N-linked (GlcNAc...) (high mannose) asparagine; by host glycan. Disulfide bonds link C429-C553, C452-C459, C487-C495, and C504-C509. N-linked (GlcNAc...) asparagine; by host glycosylation is present at N448. Positions 475 to 479 (ANITG) are HVR2. A glycan (N-linked (GlcNAc...) asparagine; by host) is linked at N476. Positions 481-494 (SDDKPYCWHYAPRP) are CD81-binding 1. A glycan (N-linked (GlcNAc...) asparagine; by host) is linked at N533. The tract at residues 545-552 (PPSGRWFG) is CD81-binding 2. N557 carries N-linked (GlcNAc...) asparagine; by host glycosylation. 4 disulfides stabilise this stretch: C565/C570, C587/C591, C603/C626, and C613/C650. N-linked (GlcNAc...) (high mannose) asparagine; by host glycosylation is found at N629 and N651. C658 and C683 form a disulfide bridge. The tract at residues 666–677 (SEQHPLLHSTTE) is PKR/eIF2-alpha phosphorylation homology domain (PePHD). The helical transmembrane segment at 732 to 752 (LADARVCVALWLILTISQAEA) threads the bilayer. The Lumenal segment spans residues 753 to 763 (ALENLVTLNAV). The chain crosses the membrane as a helical span at residues 764 to 784 (AAAGTHGIGWYLVAFCAAWYV). Over 785-787 (RGK) the chain is Cytoplasmic. The chain crosses the membrane as a helical span at residues 788–809 (LVPLVTYSLTGLWSLALLVLLL). Residues 810 to 819 (PQRAYAWSGE) are Lumenal-facing. The chain crosses the membrane as a helical span at residues 820 to 840 (DSATLGAGILVLFGFFTLSPW). Residues 841–844 (YKHW) are Cytoplasmic-facing. Residues 845-864 (IARLIWWNQYTICRCESALH) traverse the membrane as a helical segment. Over 865–887 (VWVPPLLARGGRDGVILLTSLLY) the chain is Lumenal. A helical transmembrane segment spans residues 888–908 (PSLIFDITKLLIAALGPLYLI). One can recognise a Peptidase C18 domain in the interval 905–1032 (LYLIQATITA…DYREMGWRLL (128 aa)). Topologically, residues 909–1663 (QATITATPYF…CMSADLEVTT (755 aa)) are cytoplasmic. A protease NS2-3 region spans residues 910-1212 (ATITATPYFV…PVETLSTQAR (303 aa)). C928 carries S-palmitoyl cysteine; by host lipidation. The segment at 935-955 (MGGKYFQMIILSLADGSNTYL) is interaction with host SCPS1. Catalysis depends on for protease NS2 activity; shared with dimeric partner residues H958, E978, and C999. The Peptidase S29 domain occupies 1033 to 1214 (APITAYAQQT…ETLSTQARSP (182 aa)). Residues H1089 and D1113 each act as charge relay system; for serine protease NS3 activity in the active site. Zn(2+) is bound by residues C1129 and C1131. S1171 functions as the Charge relay system; for serine protease NS3 activity in the catalytic mechanism. Zn(2+)-binding residues include C1177 and H1181. Residues 1223–1375 (PAVPQSYQVG…SNIEEVALGS (153 aa)) form the Helicase ATP-binding domain. 1236 to 1243 (APTGSGKS) contributes to the ATP binding site. S1243 contacts Mg(2+). Residues 1322 to 1325 (DDCH) carry the DECH box motif. Positions 1382–1544 (YGKAIPIACI…DLQPAETTVR (163 aa)) constitute a Helicase C-terminal domain. The RNA-binding stretch occupies residues 1492–1504 (QRRGRTGRGRLGT). A helical transmembrane segment spans residues 1664–1684 (STWVLLGGVLAAVAAYCLSVG). An NS3-binding region spans residues 1685 to 1696 (CVVIVGHIELGG). The Cytoplasmic portion of the chain corresponds to 1685 to 1811 (CVVIVGHIEL…SVTSPLTTNQ (127 aa)). A helical membrane pass occupies residues 1812-1830 (TMFFNILGGWVATHLAGPQ). Over 1831-1834 (ASSA) the chain is Lumenal. Residues 1835 to 1855 (FVVSGLAGAAIGGIGLGRVLL) form a helical membrane-spanning segment. D1856 is a topological domain (cytoplasmic). The helical transmembrane segment at 1857 to 1877 (ILAGYGAGVSGALVAFKIMGG) threads the bilayer. Topologically, residues 1878-1887 (EPPTTEDMVN) are lumenal. Residues 1888 to 1908 (LLPAILSPGALVVGVICAAIL) form a helical membrane-spanning segment. The Cytoplasmic segment spans residues 1909–1978 (RRHVGPGEGP…WINEDYPSPC (70 aa)). C1978 carries the S-palmitoyl cysteine; by host lipid modification. Residues 1979-2008 (SGDWLRIIWDWVCSVVSDFKTWLSAKIMPA) lie within the membrane without spanning it. Over 2009–3000 (LPGLPFISCQ…YHSVSRARTR (992 aa)) the chain is Cytoplasmic. Zn(2+) contacts are provided by C2017, C2035, C2037, and C2058. Positions 2126-2214 (EFFTEVDGVR…ASSSASQLSA (89 aa)) are FKBP8-binding. The tract at residues 2126–2338 (EFFTEVDGVR…PVPPPRRKRT (213 aa)) is transcriptional activation. Residues 2141–2145 (PPCRP) are interaction with non-structural protein 4A. A disordered region spans residues 2193–2215 (ARRLARGSPPSEASSSASQLSAP). The segment at 2195 to 2448 (RLARGSPPSE…ALITPCSAEE (254 aa)) is interaction with host SKP2. Phosphoserine; by host occurs at positions 2200, 2203, 2207, 2210, 2213, and 2216. A compositionally biased stretch (low complexity) spans 2200–2215 (SPPSEASSSASQLSAP). The segment at 2216–2255 (SLKATCQTHRPHPDAELVDANLLWRQEMGSNITRVESETK) is ISDR. The interaction with EIF2AK2/PKR stretch occupies residues 2216-2281 (SLKATCQTHR…AELSAAAECF (66 aa)). The interval 2255 to 2312 (KVVILDSFEPLRAETDDAELSAAAECFKKPPKYPPALPIWARPDYNPPLLDRWKSPDY) is NS4B-binding. The tract at residues 2305-2383 (DRWKSPDYVP…DTQSSTASKV (79 aa)) is V3. Disordered stretches follow at residues 2318–2338 (HGCA…RKRT) and 2356–2419 (KSFP…WSTV). The SH3-binding signature appears at 2328-2331 (PPVP). The Nuclear localization signal motif lies at 2333-2341 (PRRKRTIQL). Residue K2356 forms a Glycyl lysine isopeptide (Lys-Gly) (interchain with G-Cter in ubiquitin) linkage. Low complexity predominate over residues 2359 to 2381 (PSSKPQEENSSSSGVDTQSSTAS). Phosphoserine; by host occurs at positions 2459 and 2472. Positions 2644–2762 (PLGFSYDTRC…VAESDGVDED (119 aa)) constitute a RdRp catalytic domain. Mg(2+) contacts are provided by D2650, D2748, and D2749. The helical transmembrane segment at 3001 to 3021 (YLLLCLLLLTVGVGIFLLPAR) threads the bilayer.

It belongs to the hepacivirus polyprotein family. In terms of assembly, homooligomer. Interacts with E1 (via C-terminus). Interacts with the non-structural protein 5A. Interacts (via N-terminus) with host STAT1 (via SH2 domain); this interaction results in decreased STAT1 phosphorylation and ubiquitin-mediated proteasome-dependent STAT1 degradation, leading to decreased IFN-stimulated gene transcription. Interacts with host STAT3; this interaction constitutively activates STAT3. Interacts with host LTBR receptor. Interacts with host TNFRSF1A receptor and possibly induces apoptosis. Interacts with host HNRPK. Interacts with host YWHAE. Interacts with host UBE3A/E6AP. Interacts with host DDX3X. Interacts with host APOA2. Interacts with host RXRA protein. Interacts with host SP110 isoform 3/Sp110b; this interaction sequesters the transcriptional corepressor SP110 away from the nucleus. Interacts with host CREB3 nuclear transcription protein; this interaction triggers cell transformation. Interacts with host ACY3. Interacts with host C1QR1. Interacts with host RBM24; this interaction, which enhances the interaction of the mature core protein with 5'-UTR, may inhibit viral translation and favor replication. Interacts with host EIF2AK2/PKR; this interaction induces the autophosphorylation of EIF2AK2. Part of the viral assembly initiation complex composed of NS2, E1, E2, NS3, NS4A, NS5A and the mature core protein. Forms a heterodimer with envelope glycoprotein E2. Interacts with mature core protein. Interacts with protease NS2. The heterodimer E1/E2 interacts with host CLDN1; this interaction plays a role in viral entry into host cell. Interacts with host SPSB2 (via C-terminus). Part of the viral assembly initiation complex composed of NS2, E1, E2, NS3, NS4A, NS5A and the mature core protein. Interacts with host NEURL3; this interaction prevents E1 binding to glycoprotein E2. As to quaternary structure, forms a heterodimer with envelope glycoprotein E1. Interacts with host CD81 and SCARB1 receptors; these interactions play a role in viral entry into host cell. Interacts with host EIF2AK2/PKR; this interaction inhibits EIF2AK2 and probably allows the virus to evade the innate immune response. Interacts with host CD209/DC-SIGN and CLEC4M/DC-SIGNR. Interact with host SPCS1; this interaction is essential for viral particle assembly. Interacts with protease NS2. The heterodimer E1/E2 interacts with host CLDN1; this interaction plays a role in viral entry into host cell. Part of the viral assembly initiation complex composed of NS2, E1, E2, NS3, NS4A, NS5A and the mature core protein. Interacts with host SLC3A2/4F2hc; the interaction may facilitate viral entry into host cell. Interacts with human PLSCR1. In terms of assembly, homohexamer. Homoheptamer. Interacts with protease NS2. Homodimer. Interacts with host SPCS1; this interaction is essential for viral particle assembly. Interacts with envelope glycoprotein E1. Interacts with envelope glycoprotein E2. Interacts with viroporin p7. Interacts with serine protease/helicase NS3. Part of the replication complex composed of NS2, NS3, NS4A, NS4B, NS5A and the RNA-directed RNA polymerase embedded in an ER-derived membranous web. Part of the viral assembly initiation complex composed of NS2, E1, E2, NS3, NS4A, NS5A and the mature core protein. As to quaternary structure, interacts with protease NS2. Interacts with non-structural protein 4A; this interaction stabilizes the folding of NS3 serine protease. NS3-NS4A interaction is essential for NS3 activation and allows membrane anchorage of the latter. NS3/NS4A complex also prevents phosphorylation of host IRF3, thus preventing the establishment of dsRNA induced antiviral state. Interacts with host MAVS; this interaction leads to the cleavage and inhibition of host MAVS. Interacts with host TICAM1; this interaction leads to the cleavage and inhibition of host TICAM1. Interacts with host TANK-binding kinase/TBK1; this interaction results in the inhibition of the association between TBK1 and IRF3, which leads to the inhibition of IRF3 activation. Interacts with host RBM24. Part of the replication complex composed of NS2, NS3, NS4A, NS4B, NS5A and the RNA-directed RNA polymerase embedded in an ER-derived membranous web. Part of the viral assembly initiation complex composed of NS2, E1, E2, NS3, NS4A, NS5A and the mature core protein. In terms of assembly, interacts with NS3 serine protease; this interaction stabilizes the folding of NS3 serine protease. NS3-NS4A interaction is essential for NS3 activation and allows membrane anchorage of the latter. Interacts with non-structural protein 5A (via N-terminus). Part of the replication complex composed of NS2, NS3, NS4A, NS4B, NS5A and the RNA-directed RNA polymerase embedded in an ER-derived membranous web. Part of the viral assembly initiation complex composed of NS2, E1, E2, NS3, NS4A, NS5A and the mature core protein. Homomultimer. Interacts with non-structural protein NS5A. Interacts with host PLA2G4C; this interaction likely initiates the recruitment of replication complexes to lipid droplets. Interacts with host STING; this interaction disrupts the interaction between STING and TBK1 thereby suppressing the interferon signaling. Part of the replication complex composed of NS2, NS3, NS4A, NS4B, NS5A and the RNA-directed RNA polymerase embedded in an ER-derived membranous web. As to quaternary structure, monomer. Homodimer; dimerization is required for RNA-binding. Interacts with the mature core protein. Interacts (via N-terminus) with non-structural protein 4A. Interacts with non-structural protein 4B. Interacts (via region D2) with RNA-directed RNA polymerase. Part of the viral assembly initiation complex composed of NS2, E1, E2, NS3, NS4A, NS5A and the mature core protein. Part of the replication complex composed of NS2, NS3, NS4A, NS4B, NS5A and the RNA-directed RNA polymerase embedded in an ER-derived membranous web. Interacts with host GRB2. Interacts with host BIN1. Interacts with host PIK3R1. Interacts with host SRCAP. Interacts with host FKBP8. Interacts (via C-terminus) with host VAPB (via MSP domain). Interacts with host EIF2AK2/PKR; this interaction leads to disruption of EIF2AK2 dimerization by NS5A and probably allows the virus to evade the innate immune response. Interacts (via N-terminus) with host PACSIN2 (via N-terminus); this interaction attenuates protein kinase C alpha-mediated phosphorylation of PACSIN2 by disrupting the interaction between PACSIN2 and PRKCA. Interacts (via N-terminus) with host SRC kinase (via SH2 domain). Interacts with most Src-family kinases. Interacts with host IFI27 and SKP2; promotes the ubiquitin-mediated proteasomal degradation of NS5A. Interacts with host GPS2. Interacts with host TNFRSF21; this interaction allows the modulation by the virus of JNK, p38 MAPK, STAT3, and Akt signaling pathways in a DR6-dependent manner. Interacts (via N-terminus) with host CIDEB (via N-terminus); this interaction seems to regulate the association of HCV particles with APOE. Interacts with host CHKA/Choline Kinase-alpha; CHKA bridges host PI4KA and NS5A and potentiates NS5A-stimulated PI4KA activity, which then facilitates the targeting of the ternary complex to the ER for viral replication. Interacts with host SPSB2 (via C-terminus); this interaction targets NS5A for ubiquitination and degradation. Interacts with host RAB18; this interaction may promote the association of NS5A and other replicase components with lipid droplets. Interacts (via region D2) with host PPIA/CYPA; the interaction stimulates RNA-binding ability of NS5A and is dependent on the peptidyl-prolyl cis-trans isomerase activity of PPIA/CYPA. Interacts with host TRIM14; this interaction induces the degradation of NS5A. In terms of assembly, homooligomer. Interacts with non-structural protein 5A. Interacts with host VAPB. Interacts with host PRK2/PKN2. Interacts with host HNRNPA1 and SEPT6; these interactions facilitate viral replication. Part of the replication complex composed of NS2, NS3, NS4A, NS4B, NS5A and the RNA-directed RNA polymerase. Requires Zn(2+) as cofactor. Mg(2+) is required as a cofactor. Specific enzymatic cleavages in vivo yield mature proteins. The structural proteins, core, E1, E2 and p7 are produced by proteolytic processing by host signal peptidases. The core protein precursor is synthesized as a 23 kDa, which is retained in the ER membrane through the hydrophobic signal peptide. Cleavage by the signal peptidase releases the 21 kDa mature core protein. The cleavage of the core protein precursor occurs between aminoacids 176 and 188 but the exact cleavage site is not known. Some degraded forms of the core protein appear as well during the course of infection. The other proteins (p7, NS2, NS3, NS4A, NS4B, NS5A and NS5B) are cleaved by the viral proteases. Autoprocessing between NS2 and NS3 is mediated by the NS2 cysteine protease catalytic domain and regulated by the NS3 N-terminal domain. Post-translationally, phosphorylated by host PKC and PKA. In terms of processing, ubiquitinated; mediated by UBE3A and leading to core protein subsequent proteasomal degradation. Highly N-glycosylated. Post-translationally, palmitoylation is required for NS2/3 autoprocessing and E2 recruitment to membranes. In terms of processing, palmitoylated. This modification may play a role in its polymerization or in protein-protein interactions. Phosphorylated on serines in a basal form termed p56. p58 is a hyperphosphorylated form of p56. p56 and p58 coexist in the cell in roughly equivalent amounts. Hyperphosphorylation is dependent on the presence of NS4A. Host CSNK1A1/CKI-alpha or RPS6KB1 kinases may be responsible for NS5A phosphorylation. Post-translationally, tyrosine phosphorylation is essential for the interaction with host SRC. In terms of processing, ubiquitinated. Ubiquitination, most probably at Lys-2356, mediated by host IFI27 and SKP2 leads to proteasomal degradation, restricting viral infection. Ubiquitination by host TRIM22 leads to interruption of viral replication. The N-terminus is phosphorylated by host PRK2/PKN2.

The protein resides in the host endoplasmic reticulum membrane. It localises to the host mitochondrion membrane. Its subcellular location is the virion. It is found in the host cytoplasm. The protein localises to the host nucleus. The protein resides in the host lipid droplet. It localises to the virion membrane. Its subcellular location is the host mitochondrion. It is found in the host cell membrane. The protein localises to the host perinuclear region. It catalyses the reaction Hydrolysis of four peptide bonds in the viral precursor polyprotein, commonly with Asp or Glu in the P6 position, Cys or Thr in P1 and Ser or Ala in P1'.. The enzyme catalyses a ribonucleoside 5'-triphosphate + H2O = a ribonucleoside 5'-diphosphate + phosphate + H(+). The catalysed reaction is ATP + H2O = ADP + phosphate + H(+). It carries out the reaction RNA(n) + a ribonucleoside 5'-triphosphate = RNA(n+1) + diphosphate. Inhibited by the antiviral drug hexamethylene amiloride. Inhibition by amantadine appears to be genotype-dependent. Also inhibited by long-alkyl-chain iminosugar derivatives. With respect to regulation, activity is up-regulated by PRK2/PKN2-mediated phosphorylation. Packages viral RNA to form a viral nucleocapsid, and promotes virion budding. Participates in the viral particle production as a result of its interaction with the non-structural protein 5A. Binds RNA and may function as a RNA chaperone to induce the RNA structural rearrangements taking place during virus replication. Modulates viral translation initiation by interacting with viral IRES and 40S ribosomal subunit. Affects various cell signaling pathways, host immunity and lipid metabolism. Prevents the establishment of cellular antiviral state by blocking the interferon-alpha/beta (IFN-alpha/beta) and IFN-gamma signaling pathways and by blocking the formation of phosphorylated STAT1 and promoting ubiquitin-mediated proteasome-dependent degradation of STAT1. Activates STAT3 leading to cellular transformation. Regulates the activity of cellular genes, including c-myc and c-fos. May repress the promoter of p53, and sequester CREB3 and SP110 isoform 3/Sp110b in the cytoplasm. Represses cell cycle negative regulating factor CDKN1A, thereby interrupting an important check point of normal cell cycle regulation. Targets transcription factors involved in the regulation of inflammatory responses and in the immune response: suppresses TNF-induced NF-kappa-B activation, and activates AP-1. Binds to dendritic cells (DCs) via C1QR1, resulting in down-regulation of T-lymphocytes proliferation. Alters lipid metabolism by interacting with hepatocellular proteins involved in lipid accumulation and storage. Induces up-regulation of FAS promoter activity, and thereby contributes to the increased triglyceride accumulation in hepatocytes (steatosis). In terms of biological role, forms a heterodimer with envelope glycoprotein E2, which mediates virus attachment to the host cell, virion internalization through clathrin-dependent endocytosis and fusion with host membrane. Fusion with the host cell is most likely mediated by both E1 and E2, through conformational rearrangements of the heterodimer required for fusion rather than a classical class II fusion mechanism. E1/E2 heterodimer binds host apolipoproteins such as APOB and ApoE thereby forming a lipo-viro-particle (LVP). APOE associated to the LVP allows the initial virus attachment to cell surface receptors such as the heparan sulfate proteoglycans (HSPGs), syndecan-1 (SDC1), syndecan-1 (SDC2), the low-density lipoprotein receptor (LDLR) and scavenger receptor class B type I (SCARB1). The cholesterol transfer activity of SCARB1 allows E2 exposure and binding of E2 to SCARB1 and the tetraspanin CD81. E1/E2 heterodimer binding on CD81 activates the epithelial growth factor receptor (EGFR) signaling pathway. Diffusion of the complex E1-E2-EGFR-SCARB1-CD81 to the cell lateral membrane allows further interaction with Claudin 1 (CLDN1) and occludin (OCLN) to finally trigger HCV entry. Functionally, forms a heterodimer with envelope glycoprotein E1, which mediates virus attachment to the host cell, virion internalization through clathrin-dependent endocytosis and fusion with host membrane. Fusion with the host cell is most likely mediated by both E1 and E2, through conformational rearrangements of the heterodimer required for fusion rather than a classical class II fusion mechanism. The interaction between envelope glycoprotein E2 and host apolipoprotein E/APOE allows the proper assembly, maturation and infectivity of the viral particles. This interaction is probably promoted via the up-regulation of cellular autophagy by the virus. E1/E2 heterodimer binds host apolipoproteins such as APOB and APOE thereby forming a lipo-viro-particle (LVP). APOE associated to the LVP allows the initial virus attachment to cell surface receptors such as the heparan sulfate proteoglycans (HSPGs), syndecan-1 (SDC1), syndecan-1 (SDC2), the low-density lipoprotein receptor (LDLR) and scavenger receptor class B type I (SCARB1). The cholesterol transfer activity of SCARB1 allows E2 exposure and binding of E2 to SCARB1 and the tetraspanin CD81. E1/E2 heterodimer binding on CD81 activates the epithelial growth factor receptor (EGFR) signaling pathway. Diffusion of the complex E1-E2-EGFR-SCARB1-CD81 to the cell lateral membrane allows further interaction with Claudin 1 (CLDN1) and occludin (OCLN) to finally trigger HCV entry. Inhibits host EIF2AK2/PKR activation, preventing the establishment of an antiviral state. Viral ligand for CD209/DC-SIGN and CLEC4M/DC-SIGNR, which are respectively found on dendritic cells (DCs), and on liver sinusoidal endothelial cells and macrophage-like cells of lymph node sinuses. These interactions allow the capture of circulating HCV particles by these cells and subsequent facilitated transmission to permissive cells such as hepatocytes and lymphocyte subpopulations. The interaction between E2 and host amino acid transporter complex formed by SLC3A2 and SLC7A5/LAT1 may facilitate viral entry into host cell. Its function is as follows. Ion channel protein that acts as a viroporin and plays an essential role in the assembly, envelopment and secretion of viral particles. Regulates the host cell secretory pathway, which induces the intracellular retention of viral glycoproteins and favors assembly of viral particles. Creates a pore in acidic organelles and releases Ca(2+) and H(+) in the cytoplasm of infected cells, leading to a productive viral infection. High levels of cytoplasmic Ca(2+) may trigger membrane trafficking and transport of viral ER-associated proteins to viroplasms, sites of viral genome replication. This ionic imbalance induces the assembly of the inflammasome complex, which triggers the maturation of pro-IL-1beta into IL-1beta through the action of caspase-1. Targets also host mitochondria and induces mitochondrial depolarization. In addition of its role as a viroporin, acts as a lipid raft adhesion factor. Cysteine protease required for the proteolytic auto-cleavage between the non-structural proteins NS2 and NS3. The N-terminus of NS3 is required for the function of NS2 protease (active region NS2-3). Promotes the initiation of viral particle assembly by mediating the interaction between structural and non-structural proteins. In terms of biological role, displays three enzymatic activities: serine protease with a chymotrypsin-like fold, NTPase and RNA helicase. NS3 serine protease, in association with NS4A, is responsible for the cleavages of NS3-NS4A, NS4A-NS4B, NS4B-NS5A and NS5A-NS5B. The NS3/NS4A complex prevents phosphorylation of host IRF3, thus preventing the establishment of dsRNA induced antiviral state. The NS3/NS4A complex induces host amino acid transporter component SLC3A2, thus contributing to HCV propagation. NS3 RNA helicase binds to RNA and unwinds both dsDNA and dsRNA in the 3' to 5' direction, and likely resolves RNA complicated stable secondary structures in the template strand. Binds a single ATP and catalyzes the unzipping of a single base pair of dsRNA. Inhibits host antiviral proteins TBK1 and IRF3 thereby preventing the establishment of an antiviral state. Cleaves host MAVS/CARDIF thereby preventing the establishment of an antiviral state. Cleaves host TICAM1/TRIF, thereby disrupting TLR3 signaling and preventing the establishment of an antiviral state. Functionally, peptide cofactor which forms a non-covalent complex with the N-terminal of NS3 serine protease. The NS3/NS4A complex prevents phosphorylation of host IRF3, thus preventing the establishment of dsRNA induced antiviral state. The NS3/NS4A complex induces host amino acid transporter component SLC3A2, thus contributing to HCV propagation. Its function is as follows. Induces a specific membrane alteration that serves as a scaffold for the virus replication complex. This membrane alteration gives rise to the so-called ER-derived membranous web that contains the replication complex. NS4B self-interaction contributes to its function in membranous web formation. Promotes host TRIF protein degradation in a CASP8-dependent manner thereby inhibiting host TLR3-mediated interferon signaling. Disrupts the interaction between STING and TBK1 contributing to the inhibition of interferon signaling. Phosphorylated protein that is indispensable for viral replication and assembly. Both hypo- and hyperphosphorylated states are required for the viral life cycle. The hyperphosphorylated form of NS5A is an inhibitor of viral replication. Involved in RNA-binding and especially in binding to the viral genome. Zinc is essential for RNA-binding. Participates in the viral particle production as a result of its interaction with the mature viral core protein. Its interaction with host VAPB may target the viral replication complex to vesicles. Down-regulates viral IRES translation initiation. Mediates interferon resistance, presumably by interacting with and inhibiting host EIF2AK2/PKR. Prevents BIN1-induced apoptosis. Acts as a transcriptional activator of some host genes important for viral replication when localized in the nucleus. Via the interaction with host PACSIN2, modulates lipid droplet formation in order to promote virion assembly. Modulates TNFRSF21/DR6 signaling pathway for viral propagation. In terms of biological role, RNA-dependent RNA polymerase that performs primer-template recognition and RNA synthesis during viral replication. Initiates RNA transcription/replication at a flavin adenine dinucleotide (FAD), resulting in a 5'- FAD cap on viral RNAs. In this way, recognition of viral 5' RNA by host pattern recognition receptors can be bypassed, thereby evading activation of antiviral pathways. This Homo sapiens (Human) protein is Genome polyprotein.